A 164-amino-acid chain; its full sequence is Large ribosomal subunit protein bL9 (164 aa).

It belongs to the bacterial ribosomal protein bL9 family.

Binds to the 23S rRNA. This is Large ribosomal subunit protein bL9 from Borrelia hermsii (strain HS1 / DAH).